The sequence spans 79 residues: ATP synthase subunit c (79 aa).

The next 2 membrane-spanning stretches (helical) occupy residues 11–31 and 53–73; these read MAAAVMMGLAAIGAAIGIGIL and FFIVMGLVDAIPMIAVGLGLY.

It belongs to the ATPase C chain family. In terms of assembly, F-type ATPases have 2 components, F(1) - the catalytic core - and F(0) - the membrane proton channel. F(1) has five subunits: alpha(3), beta(3), gamma(1), delta(1), epsilon(1). F(0) has three main subunits: a(1), b(2) and c(10-14). The alpha and beta chains form an alternating ring which encloses part of the gamma chain. F(1) is attached to F(0) by a central stalk formed by the gamma and epsilon chains, while a peripheral stalk is formed by the delta and b chains.

It is found in the cell inner membrane. Its function is as follows. F(1)F(0) ATP synthase produces ATP from ADP in the presence of a proton or sodium gradient. F-type ATPases consist of two structural domains, F(1) containing the extramembraneous catalytic core and F(0) containing the membrane proton channel, linked together by a central stalk and a peripheral stalk. During catalysis, ATP synthesis in the catalytic domain of F(1) is coupled via a rotary mechanism of the central stalk subunits to proton translocation. In terms of biological role, key component of the F(0) channel; it plays a direct role in translocation across the membrane. A homomeric c-ring of between 10-14 subunits forms the central stalk rotor element with the F(1) delta and epsilon subunits. The chain is ATP synthase subunit c from Serratia proteamaculans (strain 568).